The primary structure comprises 612 residues: Chaperone protein DnaK (612 aa).

Thr174 bears the Phosphothreonine; by autocatalysis mark. The interval 578–612 is disordered; it reads GAQAGAQGQGAAGGQKQDGNVYDADYKVVDDDKKE. The span at 601–612 shows a compositional bias: basic and acidic residues; it reads ADYKVVDDDKKE.

The protein belongs to the heat shock protein 70 family.

Its function is as follows. Acts as a chaperone. The chain is Chaperone protein DnaK from Moorella thermoacetica (strain ATCC 39073 / JCM 9320).